The following is a 120-amino-acid chain: Large ribosomal subunit protein eL34x (120 aa).

Positions T31–R50 are disordered.

Belongs to the eukaryotic ribosomal protein eL34 family.

This is Large ribosomal subunit protein eL34x (RPL34C) from Arabidopsis thaliana (Mouse-ear cress).